The chain runs to 142 residues: D-aminoacyl-tRNA deacylase (142 aa).

Residues 133-134 (GP) carry the Gly-cisPro motif, important for rejection of L-amino acids motif.

The protein belongs to the DTD family. As to quaternary structure, homodimer.

The protein localises to the cytoplasm. The enzyme catalyses glycyl-tRNA(Ala) + H2O = tRNA(Ala) + glycine + H(+). It catalyses the reaction a D-aminoacyl-tRNA + H2O = a tRNA + a D-alpha-amino acid + H(+). In terms of biological role, an aminoacyl-tRNA editing enzyme that deacylates mischarged D-aminoacyl-tRNAs. Also deacylates mischarged glycyl-tRNA(Ala), protecting cells against glycine mischarging by AlaRS. Acts via tRNA-based rather than protein-based catalysis; rejects L-amino acids rather than detecting D-amino acids in the active site. By recycling D-aminoacyl-tRNA to D-amino acids and free tRNA molecules, this enzyme counteracts the toxicity associated with the formation of D-aminoacyl-tRNA entities in vivo and helps enforce protein L-homochirality. In Acidothermus cellulolyticus (strain ATCC 43068 / DSM 8971 / 11B), this protein is D-aminoacyl-tRNA deacylase.